The sequence spans 464 residues: Elongation factor 1-alpha (464 aa).

The tr-type G domain maps to 5-242 (KTHINIVVIG…DSVVPPQRPT (238 aa)). Residues 14–21 (GHVDSGKS), 91–95 (DAPGH), and 153–156 (NKMD) contribute to the GTP site. 5-glutamyl glycerylphosphorylethanolamine occurs at positions 301 and 374.

Belongs to the TRAFAC class translation factor GTPase superfamily. Classic translation factor GTPase family. EF-Tu/EF-1A subfamily.

The protein localises to the cytoplasm. In terms of biological role, this protein promotes the GTP-dependent binding of aminoacyl-tRNA to the A-site of ribosomes during protein biosynthesis. This Onchocerca volvulus protein is Elongation factor 1-alpha.